The sequence spans 188 residues: Elongation factor P (188 aa).

Lysine 34 bears the N6-(3,6-diaminohexanoyl)-5-hydroxylysine mark.

Belongs to the elongation factor P family. May be beta-lysylated on the epsilon-amino group of Lys-34 by the combined action of EpmA and EpmB, and then hydroxylated on the C5 position of the same residue by EpmC (if this protein is present). Lysylation is critical for the stimulatory effect of EF-P on peptide-bond formation. The lysylation moiety may extend toward the peptidyltransferase center and stabilize the terminal 3-CCA end of the tRNA. Hydroxylation of the C5 position on Lys-34 may allow additional potential stabilizing hydrogen-bond interactions with the P-tRNA.

Its subcellular location is the cytoplasm. The protein operates within protein biosynthesis; polypeptide chain elongation. Its function is as follows. Involved in peptide bond synthesis. Alleviates ribosome stalling that occurs when 3 or more consecutive Pro residues or the sequence PPG is present in a protein, possibly by augmenting the peptidyl transferase activity of the ribosome. Modification of Lys-34 is required for alleviation. The sequence is that of Elongation factor P from Pectobacterium carotovorum subsp. carotovorum (strain PC1).